Here is a 370-residue protein sequence, read N- to C-terminus: Glycerophosphodiester phosphodiesterase GDPD3 (370 aa).

The region spanning 35 to 322 (FVLMGHRGFG…DMVKDISEAI (288 aa)) is the GP-PDE domain.

Belongs to the glycerophosphoryl diester phosphodiesterase family. As to expression, expressed in flowers and siliques.

It carries out the reaction a sn-glycero-3-phosphodiester + H2O = an alcohol + sn-glycerol 3-phosphate + H(+). This is Glycerophosphodiester phosphodiesterase GDPD3 from Arabidopsis thaliana (Mouse-ear cress).